Reading from the N-terminus, the 378-residue chain is Ribosomal RNA large subunit methyltransferase G (378 aa).

The protein belongs to the methyltransferase superfamily. RlmG family.

The protein localises to the cytoplasm. It catalyses the reaction guanosine(1835) in 23S rRNA + S-adenosyl-L-methionine = N(2)-methylguanosine(1835) in 23S rRNA + S-adenosyl-L-homocysteine + H(+). In terms of biological role, specifically methylates the guanine in position 1835 (m2G1835) of 23S rRNA. In Shigella flexneri, this protein is Ribosomal RNA large subunit methyltransferase G.